The following is a 157-amino-acid chain: Small ribosomal subunit protein uS7 (157 aa).

The protein belongs to the universal ribosomal protein uS7 family. As to quaternary structure, part of the 30S ribosomal subunit. Contacts proteins S9 and S11.

Its function is as follows. One of the primary rRNA binding proteins, it binds directly to 16S rRNA where it nucleates assembly of the head domain of the 30S subunit. Is located at the subunit interface close to the decoding center, probably blocks exit of the E-site tRNA. This is Small ribosomal subunit protein uS7 from Borrelia turicatae (strain 91E135).